A 303-amino-acid chain; its full sequence is Na(+)-translocating NADH-quinone reductase subunit F (303 aa).

A 2Fe-2S ferredoxin-type domain is found at Gly-1 to Ile-55. Cys-4, Cys-7, and Cys-39 together coordinate [2Fe-2S] cluster. The region spanning Val-58–Lys-198 is the FAD-binding FR-type domain. The catalytic stretch occupies residues Asp-201–Tyr-303.

This sequence belongs to the NqrF family. In terms of assembly, composed of six subunits; NqrA, NqrB, NqrC, NqrD, NqrE and NqrF. [2Fe-2S] cluster serves as cofactor. It depends on FAD as a cofactor.

The protein resides in the cell inner membrane. The catalysed reaction is a ubiquinone + n Na(+)(in) + NADH + H(+) = a ubiquinol + n Na(+)(out) + NAD(+). NQR complex catalyzes the reduction of ubiquinone-1 to ubiquinol by two successive reactions, coupled with the transport of Na(+) ions from the cytoplasm to the periplasm. The first step is catalyzed by NqrF, which accepts electrons from NADH and reduces ubiquinone-1 to ubisemiquinone by a one-electron transfer pathway. The sequence is that of Na(+)-translocating NADH-quinone reductase subunit F (nqrF) from Pseudoalteromonas haloplanktis (Alteromonas haloplanktis).